We begin with the raw amino-acid sequence, 610 residues long: Glucoamylase ARB_02327-1 (610 aa).

The first 18 residues, 1–18 (MRVTSLLWSSLVIPAAVG), serve as a signal peptide directing secretion. Residues 19 to 24 (FQVRFK) constitute a propeptide that is removed on maturation. A glycan (N-linked (GlcNAc...) asparagine) is linked at Asn49. Residue Trp143 participates in substrate binding. The N-linked (GlcNAc...) asparagine glycan is linked to Asn194. Asp199 serves as the catalytic Proton acceptor. Residue Glu202 is the Proton donor of the active site. Cystine bridges form between Cys233–Cys236, Cys245–Cys472, and Cys285–Cys293. Residues 504–610 (TALPTKNNVR…SGAIKRDTWR (107 aa)) enclose the CBM20 domain.

The protein belongs to the glycosyl hydrolase 15 family.

The protein resides in the secreted. The enzyme catalyses Hydrolysis of terminal (1-&gt;4)-linked alpha-D-glucose residues successively from non-reducing ends of the chains with release of beta-D-glucose.. The sequence is that of Glucoamylase ARB_02327-1 from Arthroderma benhamiae (strain ATCC MYA-4681 / CBS 112371) (Trichophyton mentagrophytes).